The following is a 371-amino-acid chain: Putative glutamate--cysteine ligase 2 (371 aa).

It belongs to the glutamate--cysteine ligase type 2 family. YbdK subfamily.

The catalysed reaction is L-cysteine + L-glutamate + ATP = gamma-L-glutamyl-L-cysteine + ADP + phosphate + H(+). ATP-dependent carboxylate-amine ligase which exhibits weak glutamate--cysteine ligase activity. The protein is Putative glutamate--cysteine ligase 2 of Cupriavidus pinatubonensis (strain JMP 134 / LMG 1197) (Cupriavidus necator (strain JMP 134)).